The chain runs to 342 residues: Ribosomal RNA small subunit methyltransferase C (342 aa).

Belongs to the methyltransferase superfamily. RsmC family. Monomer.

Its subcellular location is the cytoplasm. The catalysed reaction is guanosine(1207) in 16S rRNA + S-adenosyl-L-methionine = N(2)-methylguanosine(1207) in 16S rRNA + S-adenosyl-L-homocysteine + H(+). Functionally, specifically methylates the guanine in position 1207 of 16S rRNA in the 30S particle. The sequence is that of Ribosomal RNA small subunit methyltransferase C from Salmonella paratyphi A (strain ATCC 9150 / SARB42).